A 299-amino-acid chain; its full sequence is Foldase protein PrsA (299 aa).

The N-terminal stretch at 1-19 (MKKWTIAASLSIGVLALSA) is a signal peptide. Cysteine 20 is lipidated: N-palmitoyl cysteine. Cysteine 20 carries S-diacylglycerol cysteine lipidation. The 91-residue stretch at 137–227 (NTEIQAQHIL…HGTHIIKVND (91 aa)) folds into the PpiC domain.

Belongs to the PrsA family.

The protein resides in the cell membrane. The enzyme catalyses [protein]-peptidylproline (omega=180) = [protein]-peptidylproline (omega=0). Functionally, plays a major role in protein secretion by helping the post-translocational extracellular folding of several secreted proteins. This is Foldase protein PrsA from Oceanobacillus iheyensis (strain DSM 14371 / CIP 107618 / JCM 11309 / KCTC 3954 / HTE831).